A 290-amino-acid polypeptide reads, in one-letter code: Acetyl-coenzyme A carboxylase carboxyl transferase subunit beta (290 aa).

The CoA carboxyltransferase N-terminal domain occupies 27 to 290 (LWVKCPSCEA…LQRQPADALA (264 aa)). Residues C31, C34, C50, and C53 each contribute to the Zn(2+) site. A C4-type zinc finger spans residues 31–53 (CPSCEAVLYRNDVDANLHVCPKC).

It belongs to the AccD/PCCB family. In terms of assembly, acetyl-CoA carboxylase is a heterohexamer composed of biotin carboxyl carrier protein (AccB), biotin carboxylase (AccC) and two subunits each of ACCase subunit alpha (AccA) and ACCase subunit beta (AccD). Zn(2+) serves as cofactor.

The protein localises to the cytoplasm. The catalysed reaction is N(6)-carboxybiotinyl-L-lysyl-[protein] + acetyl-CoA = N(6)-biotinyl-L-lysyl-[protein] + malonyl-CoA. The protein operates within lipid metabolism; malonyl-CoA biosynthesis; malonyl-CoA from acetyl-CoA: step 1/1. In terms of biological role, component of the acetyl coenzyme A carboxylase (ACC) complex. Biotin carboxylase (BC) catalyzes the carboxylation of biotin on its carrier protein (BCCP) and then the CO(2) group is transferred by the transcarboxylase to acetyl-CoA to form malonyl-CoA. This is Acetyl-coenzyme A carboxylase carboxyl transferase subunit beta from Burkholderia multivorans (strain ATCC 17616 / 249).